Consider the following 199-residue polypeptide: Chaperone protein TorD (199 aa).

Belongs to the TorD/DmsD family. TorD subfamily.

It is found in the cytoplasm. Functionally, involved in the biogenesis of TorA. Acts on TorA before the insertion of the molybdenum cofactor and, as a result, probably favors a conformation of the apoenzyme that is competent for acquiring the cofactor. The protein is Chaperone protein TorD of Escherichia coli (strain K12 / MC4100 / BW2952).